Reading from the N-terminus, the 130-residue chain is Guanylate kinase (130 aa).

Positions 1–130 (KIFEDPTTSY…EKIQSRVNEA (130 aa)) constitute a Guanylate kinase-like domain.

It belongs to the guanylate kinase family.

It is found in the cytoplasm. The catalysed reaction is GMP + ATP = GDP + ADP. Functionally, essential for recycling GMP and indirectly, cGMP. This is Guanylate kinase (gmk) from Staphylococcus epidermidis.